A 219-amino-acid chain; its full sequence is Casein kinase II subunit beta' (219 aa).

Thr-2 bears the Phosphothreonine; by autocatalysis mark.

The protein belongs to the casein kinase 2 subunit beta family. As to quaternary structure, tetramer of two alpha and two beta' subunits. Post-translationally, phosphorylated by alpha subunit.

Functionally, participates in Wnt signaling. Plays a complex role in regulating the basal catalytic activity of the alpha subunit. The sequence is that of Casein kinase II subunit beta' (CkIIbeta2) from Drosophila melanogaster (Fruit fly).